The primary structure comprises 173 residues: Ribosome maturation factor RimM (173 aa).

Residues 93-166 (EDEYLVSDMI…KMLVDTIEGM (74 aa)) form the PRC barrel domain.

It belongs to the RimM family. As to quaternary structure, binds ribosomal protein uS19.

The protein resides in the cytoplasm. Functionally, an accessory protein needed during the final step in the assembly of 30S ribosomal subunit, possibly for assembly of the head region. Essential for efficient processing of 16S rRNA. May be needed both before and after RbfA during the maturation of 16S rRNA. It has affinity for free ribosomal 30S subunits but not for 70S ribosomes. The sequence is that of Ribosome maturation factor RimM from Fusobacterium nucleatum subsp. nucleatum (strain ATCC 25586 / DSM 15643 / BCRC 10681 / CIP 101130 / JCM 8532 / KCTC 2640 / LMG 13131 / VPI 4355).